The chain runs to 132 residues: Tyrosine phosphatase-like protein N2 (132 aa).

In terms of domain architecture, Tyrosine-protein phosphatase spans 1–132; that stretch reads MQGPMKNTVA…DILGRFQRVF (132 aa).

This sequence belongs to the protein-tyrosine phosphatase family.

In Microplitis demolitor (Parasitoid wasp), this protein is Tyrosine phosphatase-like protein N2 (N4).